An 86-amino-acid polypeptide reads, in one-letter code: RNA-binding protein Hfq (86 aa).

In terms of domain architecture, Sm spans 9–68 (DPYLNTLRKEKVPVSIYLVNGIKLQGQIESFDQFVVLLKNTVSQMVYKHAISTVVPARPV). A disordered region spans residues 66–86 (RPVRLPSPSDAEHGDSEPGNA). The segment covering 75–86 (DAEHGDSEPGNA) has biased composition (basic and acidic residues).

It belongs to the Hfq family. In terms of assembly, homohexamer.

In terms of biological role, RNA chaperone that binds small regulatory RNA (sRNAs) and mRNAs to facilitate mRNA translational regulation in response to envelope stress, environmental stress and changes in metabolite concentrations. Also binds with high specificity to tRNAs. In Pseudomonas entomophila (strain L48), this protein is RNA-binding protein Hfq.